Reading from the N-terminus, the 428-residue chain is Elongation factor 1-alpha (428 aa).

A tr-type G domain is found at 5–225 (KPILNVAFIG…DAFQPPEKPT (221 aa)). Positions 14 to 21 (GHVDAGKS) are G1. 14–21 (GHVDAGKS) contacts GTP. Position 21 (serine 21) interacts with Mg(2+). The G2 stretch occupies residues 70-74 (GVTID). Residues 91–94 (DCPG) are G3. GTP-binding positions include 91–95 (DCPGH) and 149–152 (NKMD). The tract at residues 149–152 (NKMD) is G4. Residues 189–191 (ASL) form a G5 region.

Belongs to the TRAFAC class translation factor GTPase superfamily. Classic translation factor GTPase family. EF-Tu/EF-1A subfamily.

The protein localises to the cytoplasm. It catalyses the reaction GTP + H2O = GDP + phosphate + H(+). Its function is as follows. GTP hydrolase that promotes the GTP-dependent binding of aminoacyl-tRNA to the A-site of ribosomes during protein biosynthesis. The polypeptide is Elongation factor 1-alpha (Methanococcus maripaludis (strain C7 / ATCC BAA-1331)).